A 32-amino-acid chain; its full sequence is U13-ctenitoxin-Pn1a (32 aa).

3 disulfide bridges follow: Cys-3-Cys-17, Cys-10-Cys-21, and Cys-16-Cys-30.

In terms of tissue distribution, expressed by the venom gland.

The protein resides in the secreted. Acts as a neurotoxin. The sequence is that of U13-ctenitoxin-Pn1a from Phoneutria nigriventer (Brazilian armed spider).